An 837-amino-acid polypeptide reads, in one-letter code: MNLISKISPQNRILNRARLIAEEVLKKEEEYEHFSDQELINKSDDIIEYLANNNPLDDKLVEALCIIREVIYRVHNKRAFKVQIIGAIIVYFGDFAEMMTGEGKTLTLVLVAYLNALYKKGVHMVTVNEYLVKVGAEFATPVLNFLNMSVGQITANMNEYEKRNNYNCDITYTTNSELGFDYLRDNMVTNYANKVQRGLWFAIVDEGDSVLIDEARTPLIISGEPQEEIGNYVKADRFVKTLYPQDFTLDPESQSVALTESGVEKAQKFFNTKNYYNFENSDIIHKVTNALRANFTFFNGREYIVKKDDDGEDIIALVDQSTGRIMEGRSYSAGLQQAIQAKEQIKIEPENLTVATITYQSLFRLYKKLAAVSGTAITEAEEFLNIYNMVVVTIPTNKPIKRIDHPDYVFDNKRTKWKYVIADVIRRHENGQPILIGTASVEDSEILHQLLERVNIPHEVLNAKNHAREAEIIACAGEYKAVTIATNMAGRGTDIKLSPESLEAGGLCVIGTERSDSRRIDNQLRGRAGRQGDIGESRFFISMEDTLFSRFATDNLAKADDKLSEDVISTKFFTRLLNNTQKKVESLNYDTRKNLIDYDHVLSNQRELIYKQRDKILISSDNKDILYRMLDSVIDDLIYQSHNKPNEDIIDIKKLIDLATQNIFYDNYLNQDEYYGLKFEQIKTKLKKDCINFFEQKEQLMTPTIFNQILSEIMISNIDEEWTKHLDITSKIREGVNLRAYEQKAPLNIYVEDSDKLFEKLKHNVAWKTVCSIGKINYVHQDYSDLNSEFIVNDNEINENNNSIDFENFNESIPTDQTIQESFDDNQSDNEDDKNNN.

ATP-binding positions include glutamine 83, 101 to 105 (GEGKT), and aspartate 494.

It belongs to the SecA family. As to quaternary structure, monomer and homodimer. Part of the essential Sec protein translocation apparatus which comprises SecA, SecYEG and auxiliary proteins SecDF. Other proteins may also be involved.

It localises to the cell membrane. The protein resides in the cytoplasm. The enzyme catalyses ATP + H2O + cellular proteinSide 1 = ADP + phosphate + cellular proteinSide 2.. Functionally, part of the Sec protein translocase complex. Interacts with the SecYEG preprotein conducting channel. Has a central role in coupling the hydrolysis of ATP to the transfer of proteins into and across the cell membrane, serving as an ATP-driven molecular motor driving the stepwise translocation of polypeptide chains across the membrane. The polypeptide is Protein translocase subunit SecA (Ureaplasma parvum serovar 3 (strain ATCC 27815 / 27 / NCTC 11736)).